The chain runs to 608 residues: FAD-binding monooxygenase ktnD (608 aa).

N-linked (GlcNAc...) asparagine glycosylation occurs at N4. The helical transmembrane segment at 17–37 (ATVVIIGAGVSGMCMAIDLLH) threads the bilayer. FAD contacts are provided by residues 56 to 59 (TWAN), 68 to 69 (DV), and Y74. 66 to 68 (ASD) is a binding site for NADP(+). Residue N114 is glycosylated (N-linked (GlcNAc...) asparagine). NADP(+) is bound by residues 201 to 207 (NGASAIQ) and 224 to 225 (RS). N-linked (GlcNAc...) asparagine glycosylation occurs at N325. Residues 535–555 (ALVSNVTLFLGVALAAGGVYW) traverse the membrane as a helical segment.

It belongs to the FAD-binding monooxygenase family. It depends on FAD as a cofactor.

It localises to the membrane. Functionally, non-reducing polyketide synthase; part of the gene cluster that mediates the biosynthesis of the bicoumarin kotanin. The non-reducing polyketide synthase ktnS first catalyzes the formation of the pentaketidic 4,7-dihydroxy-5-methylcoumarin from acetyl coenzyme A and 4 malonyl coenzyme A molecules. Further O-methylation by ktnB leads to the formation of 7-demethylsiderin. Then, an oxidative phenol coupling catalyzed by the cytochrome P450 monooxygenase ktnC forms the 8,8'-dimer P-orlandin via dimerization the monomeric precursor, 7-demethylsiderin. P-orlandin is subsequently O-methylated in a stepwise fashion to demethylkotanin and kotanin. The function of ktnD within the pathway has not been determined yet. The sequence is that of FAD-binding monooxygenase ktnD from Aspergillus niger (strain ATCC MYA-4892 / CBS 513.88 / FGSC A1513).